Here is a 62-residue protein sequence, read N- to C-terminus: Conotoxin Pn-014 (62 aa).

Residues 1–22 (MRCLPVFVILLLLIASAPSVDA) form the signal peptide. Residues 23-48 (RPKTKDDIPLVSFQDHAKRILQTFES) constitute a propeptide that is removed on maturation. At W61 the chain carries Tryptophan amide.

Belongs to the conotoxin T superfamily. In terms of processing, contains 2 disulfide bonds that can be either 'C1-C3, C2-C4' or 'C1-C4, C2-C3', since these disulfide connectivities have been observed for conotoxins with cysteine framework V (for examples, see AC P0DQQ7 and AC P81755). As to expression, expressed by the venom duct.

The protein localises to the secreted. The chain is Conotoxin Pn-014 from Conus pennaceus (Feathered cone).